Reading from the N-terminus, the 250-residue chain is 3-deoxy-manno-octulosonate cytidylyltransferase (250 aa).

It belongs to the KdsB family.

It localises to the cytoplasm. It catalyses the reaction 3-deoxy-alpha-D-manno-oct-2-ulosonate + CTP = CMP-3-deoxy-beta-D-manno-octulosonate + diphosphate. Its pathway is nucleotide-sugar biosynthesis; CMP-3-deoxy-D-manno-octulosonate biosynthesis; CMP-3-deoxy-D-manno-octulosonate from 3-deoxy-D-manno-octulosonate and CTP: step 1/1. It functions in the pathway bacterial outer membrane biogenesis; lipopolysaccharide biosynthesis. Functionally, activates KDO (a required 8-carbon sugar) for incorporation into bacterial lipopolysaccharide in Gram-negative bacteria. This is 3-deoxy-manno-octulosonate cytidylyltransferase from Bacteroides thetaiotaomicron (strain ATCC 29148 / DSM 2079 / JCM 5827 / CCUG 10774 / NCTC 10582 / VPI-5482 / E50).